A 308-amino-acid polypeptide reads, in one-letter code: Aliphatic nitrilase (308 aa).

Residues 4 to 270 (FRAAVVQAAP…ETILTADLDT (267 aa)) form the CN hydrolase domain. Glutamate 44 acts as the Proton acceptor in catalysis. The active site involves lysine 130. Catalysis depends on cysteine 164, which acts as the Nucleophile.

Belongs to the carbon-nitrogen hydrolase superfamily. Nitrilase family.

The catalysed reaction is a nitrile + 2 H2O = a carboxylate + NH4(+). Its function is as follows. Nitrilase that hydrolyzes preferentially phenylacetonitrile, but not (R,S)-mandelonitrile. Also acts on dinitriles like phenylenediacetonitriles (PDAs) 1,2-PDA, 1,3-PDA, and 1,4-PDA, and cyanophenyl acetonitriles (CPAs) 2-CPA and 4-CPA, but with lower activities. In Sinorhizobium fredii (strain HH103), this protein is Aliphatic nitrilase (nit).